We begin with the raw amino-acid sequence, 662 residues long: Polyunsaturated fatty acid lipoxygenase ALOX15 (662 aa).

The PLAT domain maps to 2-114 (GLYRIRVSTG…VLSLPEGTGR (113 aa)). Positions 115-662 (TVGDDPQGLF…PSIVENSVAI (548 aa)) constitute a Lipoxygenase domain. 5 residues coordinate Fe cation: His-360, His-365, His-540, His-544, and Ile-662.

Belongs to the lipoxygenase family. Interacts with PEBP1; in response to IL13/interleukin-13, prevents the interaction of PEBP1 with RAF1 to activate the ERK signaling cascade. Fe cation is required as a cofactor.

It is found in the cytoplasm. The protein resides in the cytosol. It localises to the cell membrane. The protein localises to the lipid droplet. It catalyses the reaction (5Z,8Z,11Z,14Z)-eicosatetraenoate + O2 = (12S)-hydroperoxy-(5Z,8Z,10E,14Z)-eicosatetraenoate. The catalysed reaction is (9Z,12Z)-octadecadienoate + O2 = (13S)-hydroperoxy-(9Z,11E)-octadecadienoate. It carries out the reaction (5Z,8Z,11Z,14Z)-eicosatetraenoate + O2 = (15S)-hydroperoxy-(5Z,8Z,11Z,13E)-eicosatetraenoate. The enzyme catalyses (5Z,8Z,11Z,14Z)-eicosatetraenoate + 2 O2 = (14R,15S)-dihydroperoxy-(5Z,8Z,10E,12E)-eicosatetraenoate. It catalyses the reaction (5Z,8Z,11Z,14Z)-eicosatetraenoate + 2 O2 = (8S,15S)-dihydroperoxy-(5Z,9E,11Z,13E)-eicosatetraenoate. The catalysed reaction is (14S,15R)-epoxy-(5Z,8Z,11Z)-eicosatrienoate + O2 = (8S)-hydroperoxy-(14S,15R)-epoxy-(5Z,9E,11Z)-eicosatrienoate. It carries out the reaction (14S,15R)-epoxy-(5Z,8Z,11Z)-eicosatrienoate + O2 = (12S)-hydroperoxy-(14S,15R)-epoxy-(5Z,8Z,10E)-eicosatrienoate. The enzyme catalyses (14R,15S)-epoxy-(5Z,8Z,11Z)-eicosatrienoate + O2 = (5S)-hydroperoxy-(14R,15S)-epoxy-(6E,8Z,11Z)-eicosatrienoate. It catalyses the reaction (14R,15S)-epoxy-(5Z,8Z,11Z)-eicosatrienoate + O2 = (12S)-hydroperoxy-(14R,15S)-epoxy-(5Z,8Z,10E)-eicosatrienoate. The catalysed reaction is (15R)-hydroperoxy-(5Z,8Z,11Z,13E)-eicosatetraenoate = 15-oxo-(5Z,8Z,11Z,13E)-eicosatetraenoate + H2O. It carries out the reaction (15S)-hydroperoxy-(5Z,8Z,11Z,13E)-eicosatetraenoate = (14S,15S)-epoxy-(5Z,8Z,10E,12E)-eicosatetraenoate + H2O. The enzyme catalyses (12S)-hydroperoxy-(5Z,8Z,10E,14Z)-eicosatetraenoate = (8S)-hydroxy-(11S,12S)-epoxy-(5Z,9E,14Z)-eicosatrienoate. It catalyses the reaction (4Z,7Z,10Z,13Z,16Z)-docosapentaenoate + O2 = 14-hydroperoxy-(4Z,7Z,10Z,12E,16Z)-docosapentaenoate. The catalysed reaction is (7Z,10Z,13Z,16Z,19Z)-docosapentaenoate + O2 = 14-hydroperoxy-(7Z,10Z,12E,16Z,19Z)-docosapentaenoate. It carries out the reaction (4Z,7Z,10Z,13Z,16Z,19Z)-docosahexaenoate + O2 = (14S)-hydroperoxy-(4Z,7Z,10Z,12E,16Z,19Z)-docosahexaenoate. The enzyme catalyses (4Z,7Z,10Z,13Z,16Z,19Z)-docosahexaenoate + O2 = (17S)-hydroperoxy-(4Z,7Z,10Z,13Z,15E,19Z)-docosahexaenoate. It catalyses the reaction (7S)-hydroperoxy-(4Z,8E,10Z,13Z,16Z,19Z)-docosahexaenoate + O2 = (7S,14S)-dihydroperoxy-(4Z,8E,10Z,12E,16Z,19Z)-docosahexaenoate. The catalysed reaction is (7S)-hydroperoxy-(4Z,8E,10Z,13Z,16Z,19Z)-docosahexaenoate + O2 = (7S,17S)-dihydroperoxy-(4Z,8E,10Z,13Z,15E,19Z)-docosahexaenoate. It carries out the reaction (4Z,7Z,10Z,13Z,16Z,19Z)-docosahexaenoate + O2 = (11S)-hydroperoxy-(4Z,7Z,9E,13Z,16Z,19Z)-docosahexaenoate. The enzyme catalyses N-(5Z,8Z,11Z,14Z)-eicosatetraenoyl-taurine + O2 = N-(12S)-hydroperoxy-(5Z,8Z,10E,14Z)-eicosatetraenoyl-taurine. It catalyses the reaction N-(5Z,8Z,11Z,14Z)-eicosatetraenoyl-gamma-aminobutanoate + O2 = N-(12S)-hydroperoxy-(5Z,8Z,10E,14Z)-eicosatetraenoyl-gamma-aminobutanoate. The catalysed reaction is N-(5Z,8Z,11Z,14Z)-eicosatetraenoyl-glycine + O2 = N-(12S)-hydroperoxy-(5Z,8Z,10E,14Z)-eicosatetraenoyl-glycine. It carries out the reaction N-(5Z,8Z,11Z,14Z)-eicosatetraenoyl-L-alanine + O2 = N-(12S)-hydroperoxy-(5Z,8Z,10E,14Z)-eicosatetraenoyl-alanine. The enzyme catalyses N-(5Z,8Z,11Z,14Z)-eicosatetraenoyl-taurine + O2 = N-(15S)-hydroperoxy-(5Z,8Z,11Z,13E)-eicosatetraenoyl-taurine. It catalyses the reaction N-(5Z,8Z,11Z,14Z)-eicosatetraenoyl-gamma-aminobutanoate + O2 = N-(15S)-hydroperoxy-(5Z,8Z,11Z,13E)-eicosatetraenoyl-gamma-aminobutanoate. The catalysed reaction is N-(5Z,8Z,11Z,14Z)-eicosatetraenoyl-glycine + O2 = N-(15S)-hydroperoxy-(5Z,8Z,11Z,13E)-eicosatetraenoyl-glycine. It carries out the reaction N-(5Z,8Z,11Z,14Z)-eicosatetraenoyl-L-alanine + O2 = N-(15S)-hydroperoxy-(5Z,8Z,11Z,13E)-eicosatetraenoyl-alanine. The protein operates within lipid metabolism; hydroperoxy eicosatetraenoic acid biosynthesis. Functionally, non-heme iron-containing dioxygenase that catalyzes the stereo-specific peroxidation of free and esterified polyunsaturated fatty acids generating a spectrum of bioactive lipid mediators. It inserts peroxyl groups at C12 or C15 of arachidonate ((5Z,8Z,11Z,14Z)-eicosatetraenoate) producing both 12-hydroperoxyeicosatetraenoate/12-HPETE and 15-hydroperoxyeicosatetraenoate/15-HPETE. It may then act on 12-HPETE to produce hepoxilins, which may show pro-inflammatory properties. Can also peroxidize linoleate ((9Z,12Z)-octadecadienoate) to 13-hydroperoxyoctadecadienoate. May participate in the sequential oxidations of DHA ((4Z,7Z,10Z,13Z,16Z,19Z)-docosahexaenoate) to generate specialized pro-resolving mediators (SPMs)like resolvin D5 ((7S,17S)-diHPDHA) and (7S,14S)-diHPDHA, that actively down-regulate the immune response and have anti-aggregation properties with platelets. Can convert epoxy fatty acids to hydroperoxy-epoxides derivatives followed by an intramolecular nucleophilic substitution leading to the formation of monocyclic endoperoxides. Plays an important role during the maintenance of self-tolerance by peroxidizing membrane-bound phosphatidylethanolamine which can then signal the sorting process for clearance of apoptotic cells during inflammation and prevent an autoimmune response. In addition to its role in the immune and inflammatory responses, this enzyme may play a role in epithelial wound healing in the cornea through production of lipoxin A4 (LXA(4)) and docosahexaenoic acid-derived neuroprotectin D1 (NPD1; 10R,17S-HDHA), both lipid autacoids exhibit anti-inflammatory and neuroprotective properties. Furthermore, it may regulate actin polymerization which is crucial for several biological processes such as the phagocytosis of apoptotic cells. It is also implicated in the generation of endogenous ligands for peroxisome proliferator activated receptor (PPAR-gamma), hence modulating macrophage development and function. It may also exert a negative effect on skeletal development by regulating bone mass through this pathway. As well as participates in ER stress and downstream inflammation in adipocytes, pancreatic islets, and liver. Finally, it is also involved in the cellular response to IL13/interleukin-13. The chain is Polyunsaturated fatty acid lipoxygenase ALOX15 from Pongo abelii (Sumatran orangutan).